The sequence spans 474 residues: tRNA-2-methylthio-N(6)-dimethylallyladenosine synthase (474 aa).

The region spanning 3-120 is the MTTase N-terminal domain; it reads KKLHIKTWGC…LPEMINSVRG (118 aa). Residues Cys-12, Cys-49, Cys-83, Cys-157, Cys-161, and Cys-164 each coordinate [4Fe-4S] cluster. The Radical SAM core domain occupies 143-375; that stretch reads RAEGPTAFVS…QERINQQAMA (233 aa). The TRAM domain maps to 378 to 441; it reads RRMLGTTQRI…PNSLRGKVVR (64 aa).

It belongs to the methylthiotransferase family. MiaB subfamily. Monomer. [4Fe-4S] cluster is required as a cofactor.

Its subcellular location is the cytoplasm. It carries out the reaction N(6)-dimethylallyladenosine(37) in tRNA + (sulfur carrier)-SH + AH2 + 2 S-adenosyl-L-methionine = 2-methylsulfanyl-N(6)-dimethylallyladenosine(37) in tRNA + (sulfur carrier)-H + 5'-deoxyadenosine + L-methionine + A + S-adenosyl-L-homocysteine + 2 H(+). Its function is as follows. Catalyzes the methylthiolation of N6-(dimethylallyl)adenosine (i(6)A), leading to the formation of 2-methylthio-N6-(dimethylallyl)adenosine (ms(2)i(6)A) at position 37 in tRNAs that read codons beginning with uridine. In Escherichia coli (strain SE11), this protein is tRNA-2-methylthio-N(6)-dimethylallyladenosine synthase.